Here is a 581-residue protein sequence, read N- to C-terminus: Adenine deaminase (581 aa).

The protein belongs to the metallo-dependent hydrolases superfamily. Adenine deaminase family. Mn(2+) serves as cofactor.

The catalysed reaction is adenine + H2O + H(+) = hypoxanthine + NH4(+). The chain is Adenine deaminase from Lysinibacillus sphaericus (strain C3-41).